Reading from the N-terminus, the 124-residue chain is Ragulator complex protein LAMTOR3 homolog (124 aa).

The protein belongs to the LAMTOR3 family. In terms of assembly, part of the Ragulator complex composed of Lamtor3, Lamtor2, CG14184, CG14812, and Lamtor4.

Regulator of the TOR pathway, a signaling cascade that promotes cell growth in response to growth factors, energy levels, and amino acids. As part of the Ragulator complex, may activate the TOR signaling cascade in response to amino acids. This Drosophila melanogaster (Fruit fly) protein is Ragulator complex protein LAMTOR3 homolog.